The following is a 148-amino-acid chain: Receptor activity-modifying protein 1 (148 aa).

Positions 1–26 are cleaved as a signal peptide; that stretch reads MARGLRGLPRRGLWLLLVNHLFLATA. Disulfide bonds link Cys27–Cys82, Cys40–Cys72, and Cys57–Cys104. At 27–118 the chain is on the extracellular side; sequence CQDTDHAALL…RALQDPPSSV (92 aa). The chain crosses the membrane as a helical span at residues 119-140; that stretch reads LCPFIVVPILATLLMTALVVWR. The Cytoplasmic portion of the chain corresponds to 141–148; sequence SKRPEGIV.

It belongs to the RAMP family. In terms of assembly, heterodimer of CALCRL and RAMP1; the interaction induces allosteric modulation of CALCRL function and CGRP1/CALCA and CGRP2/CALCB ligand specificity. Heterodimer of CALCR and RAMP1; interaction forms the AMYR1 receptor complex for amylin/IAPP and CGRP1/CALCA ligands.

The protein localises to the cell membrane. Functionally, accessory protein that interacts with and modulates the function of G-protein coupled receptors including calcitonin gene-related peptide type 1 receptor (CALCRL) and calcitonin receptor (CALCR). Required for the transport of CALCRL to the plasma membrane. Together with CALCRL, form the receptor complex for the calcitonin gene-related peptides CGRP1/CALCA and CGRP2/CALCB. Together with CALCR, form the AMYR1 receptor complex for amylin/IAPP and CGRP1/CALCA. The chain is Receptor activity-modifying protein 1 (RAMP1) from Sus scrofa (Pig).